Consider the following 225-residue polypeptide: Red fluorescent protein drFP583 (225 aa).

Residues 66-68 constitute a cross-link (2-iminomethyl-5-imidazolinone (Gln-Gly)); that stretch reads QYG. Tyrosine 67 bears the (Z)-2,3-didehydrotyrosine mark.

It belongs to the GFP family. In terms of assembly, homotetramer. In terms of processing, contains a chromophore consisting of modified amino acid residues. The chromophore is formed by autocatalytic backbone condensation between Xaa-N and Gly-(N+2), oxidation of Tyr-(N+1) to didehydrotyrosine, and formation of a double bond to the alpha-amino nitrogen of residue Xaa-N. Maturation of the chromophore requires nothing other than molecular oxygen.

Functionally, thought to play a role in photoprotection of the coral's resident symbiont microalgae's photosystems from photoinhibition caused by high light levels found near the surface of coral reefs. In deeper water, the fluorescence may be to convert blue light into longer wavelengths more suitable for use in photosynthesis by the microalgal symbionts. The chain is Red fluorescent protein drFP583 from Discosoma sp. (Sea anemone).